A 2126-amino-acid polypeptide reads, in one-letter code: Phthioceranic/hydroxyphthioceranic acid synthase (2126 aa).

The Ketosynthase family 3 (KS3) domain maps to 24 to 447 (VTPVAVIGMA…GTNVHAVVEQ (424 aa)). Catalysis depends on C196, which acts as the Acyl-thioester intermediate; for beta-ketoacyl synthase activity. Catalysis depends on for beta-ketoacyl synthase activity residues H331 and H367. The interval 449-549 (PQTEAQPHAA…VYQPAVGQDD (101 aa)) is linker domain (LD). The acyltransferase (AT) stretch occupies residues 550–849 (RGPVWLFSGQ…VAALAGMRRE (300 aa)). The Acyl-ester intermediate; for acyltransferase activity role is filled by S641. The dehydratase (DH) stretch occupies residues 909–1191 (STVAVHPLLG…LAVCGLRIGT (283 aa)). Residues 914–1032 (HPLLGAHVRL…RRASAVLQQV (119 aa)) form an N-terminal hotdog fold region. A PKS/mFAS DH domain is found at 914-1198 (HPLLGAHVRL…IGTGVSERDK (285 aa)). Residue H947 is the Proton acceptor; for dehydratase activity of the active site. The tract at residues 1051-1198 (PCRVDGEDLR…IGTGVSERDK (148 aa)) is C-terminal hotdog fold. The active-site Proton donor; for dehydratase activity is D1115. Positions 1227-1398 (KWLLISDCAA…SEEDETAWRD (172 aa)) are pseudo beta-ketoacyl reductase (PsiKR). The interval 1426–1750 (SGMRLQIRTP…EHTGKLVLHI (325 aa)) is enoylreductase (ER). A beta-ketoacyl reductase (KR) region spans residues 1772 to 2019 (GSYIITGGLG…AERSRFFEVF (248 aa)). NADP(+)-binding positions include 1780 to 1783 (LGGL), 1803 to 1806 (SRTQ), 1831 to 1832 (DI), and 1904 to 1905 (FS). One can recognise a Carrier domain in the interval 2040–2126 (DEWPARLRQL…DAPAAALSSQ (87 aa)). Position 2075 is an O-(pantetheine 4'-phosphoryl)serine (S2075).

Pantetheine 4'-phosphate serves as cofactor.

The enzyme catalyses hexadecanoyl-[(hydroxy)phthioceranic acid synthase] + 7 (S)-methylmalonyl-CoA + 14 NADPH + 21 H(+) = C37-phthioceranyl-[(hydroxy)phthioceranic acid synthase] + 7 CO2 + 14 NADP(+) + 7 CoA + 7 H2O. It carries out the reaction hexadecanoyl-[(hydroxy)phthioceranic acid synthase] + 8 (S)-methylmalonyl-CoA + 16 NADPH + 24 H(+) = C40-phthioceranyl-[(hydroxy)phthioceranic acid synthase] + 8 CO2 + 16 NADP(+) + 8 CoA + 8 H2O. It participates in lipid metabolism; fatty acid biosynthesis. The protein operates within glycolipid metabolism; sulfolipid-1 biosynthesis. Its function is as follows. Involved in sulfolipid-1 biosynthesis. Catalyzes the synthesis of the hepta- and octamethyl phthioceranic and hydroxyphthioceranic acids, the methyl-branched acyl constituents of sulfolipids. The polypeptide is Phthioceranic/hydroxyphthioceranic acid synthase (pks2) (Mycobacterium bovis (strain ATCC BAA-935 / AF2122/97)).